The sequence spans 250 residues: Homeobox protein DLL-1 (250 aa).

2 disordered regions span residues 40 to 66 (YPSL…SGSN) and 84 to 106 (SPYL…PDQQ). Positions 84–98 (SPYLQSCNSNTTTQS) are enriched in polar residues. Positions 125–184 (IRKPRTIYSSLQLQALNHRFQQTQYLALPERAELAASLGVTQTQVKIWFQNKRSKYKKLI) form a DNA-binding region, homeobox.

The protein belongs to the distal-less homeobox family.

It localises to the nucleus. The chain is Homeobox protein DLL-1 (dll1) from Xenopus laevis (African clawed frog).